An 89-amino-acid chain; its full sequence is MSITPERKQALIEEYKTKDGDTGSPEVQVAILTERIVNLTEHLKTHAKDFHSRRGLLVMVGQRRGLLDYLKRKNQGRYDTLIQRLGLRR.

It belongs to the universal ribosomal protein uS15 family. Part of the 30S ribosomal subunit. Forms a bridge to the 50S subunit in the 70S ribosome, contacting the 23S rRNA.

Functionally, one of the primary rRNA binding proteins, it binds directly to 16S rRNA where it helps nucleate assembly of the platform of the 30S subunit by binding and bridging several RNA helices of the 16S rRNA. Its function is as follows. Forms an intersubunit bridge (bridge B4) with the 23S rRNA of the 50S subunit in the ribosome. This is Small ribosomal subunit protein uS15 from Rhodospirillum centenum (strain ATCC 51521 / SW).